The primary structure comprises 694 residues: Elongation factor G (694 aa).

Residues 8–287 (EDYRNFGIMA…AVVEFLPAPT (280 aa)) form the tr-type G domain. GTP-binding positions include 17–24 (AHIDAGKT), 86–90 (DTPGH), and 140–143 (NKMD).

The protein belongs to the TRAFAC class translation factor GTPase superfamily. Classic translation factor GTPase family. EF-G/EF-2 subfamily.

The protein resides in the cytoplasm. In terms of biological role, catalyzes the GTP-dependent ribosomal translocation step during translation elongation. During this step, the ribosome changes from the pre-translocational (PRE) to the post-translocational (POST) state as the newly formed A-site-bound peptidyl-tRNA and P-site-bound deacylated tRNA move to the P and E sites, respectively. Catalyzes the coordinated movement of the two tRNA molecules, the mRNA and conformational changes in the ribosome. In Brucella ovis (strain ATCC 25840 / 63/290 / NCTC 10512), this protein is Elongation factor G.